A 198-amino-acid chain; its full sequence is Cyclin-dependent kinase inhibitor 1B (198 aa).

A compositionally biased stretch (polar residues) spans 1–11 (MSNVRVSNGSP). The segment at 1–22 (MSNVRVSNGSPSLERMDARQAE) is disordered. Phosphoserine; by UHMK1 is present on Ser10. The interval 51 to 91 (DMEEASQRKWNFDFQNHKPLEGKYEWQEVEKGSLPEFYYRP) is interaction with CDK2. Phosphotyrosine; by SRC is present on Tyr74. The interval 87–198 (FYYRPPRPPK…KKPGLRRRQT (112 aa)) is disordered. Tyr88 carries the phosphotyrosine; by ABL, LYN and SRC modification. The residue at position 89 (Tyr89) is a Phosphotyrosine. Residues 104–113 (QESQDVSGNR) show a composition bias toward polar residues. Residues 126 to 137 (EDTHLVDQKTDT) are compositionally biased toward basic and acidic residues. Residues 153–169 (KRPATDDSSPQNKRANR) carry the Nuclear localization signal motif. Position 157 is a phosphothreonine; by CaMK1, PKB/AKT1 and PIM1 (Thr157). The residue at position 170 (Thr170) is a Phosphothreonine. Residues 175 to 186 (SDGSPNAGSVEQ) are compositionally biased toward polar residues. A Phosphothreonine; by PKB/AKT1, CDK1 and CDK2 modification is found at Thr187. The residue at position 198 (Thr198) is a Phosphothreonine; by CaMK1, PKB/AKT1, RPS6KA1, RPS6KA3 and PIM1.

The protein belongs to the CDI family. In terms of assembly, forms a ternary complex composed of CCNE1, CDK2 and CDKN1B. Interacts directly with CCNE1; the interaction is inhibited by CDK2-dependent phosphorylation on Thr-187. Interacts with COPS5, subunit of the COP9 signalosome complex; the interaction leads to CDKN1B degradation. Interacts with NUP50; the interaction leads to nuclear import and degradation of phosphorylated CDKN1B. Interacts with CCND1 and SNX6. Interacts (Thr-198-phosphorylated form) with 14-3-3 proteins, binds strongly YWHAQ, weakly YWHAE and YWHAH, but not YWHAB nor YWHAZ; the interaction with YWHAQ results in translocation to the cytoplasm. Interacts with AKT1 and LYN; the interactions lead to cytoplasmic mislocation, phosphorylation of CDKN1B and inhibition of cell cycle arrest. Forms a ternary complex with CCNA2 and CDK2; CDKN1B inhibits the kinase activity of CDK2 through conformational rearrangements. Interacts (unphosphorylated form) with CDK2. Forms a complex with CDK2 and SPDYA, but does not directly interact with SPDYA. Forms a ternary complex composed of cyclin D, CDK4 and CDKN1B. Interacts (phosphorylated on Tyr-88 and Tyr-89) with CDK4; the interaction is required for cyclin D and CDK4 complex assembly, induces nuclear translocation and activates the CDK4 kinase activity. Interacts with GRB2. Interacts with PIM1. Identified in a complex with SKP1, SKP2 and CKS1B. Interacts with UHMK1; the interaction leads to cytoplasmic mislocation, phosphorylation of CDKN1B and inhibition of cell cycle arrest. Also interacts with CDK1. Dephosphorylated on Thr-187 by PPM1H, leading to CDKN1B stability. In terms of processing, phosphorylated; phosphorylation occurs on serine, threonine and tyrosine residues. Phosphorylation on Ser-10 is the major site of phosphorylation in resting cells, takes place at the G(0)-G(1) phase and leads to protein stability. Phosphorylation on other sites is greatly enhanced by mitogens, growth factors, cMYC and in certain cancer cell lines. The phosphorylated form found in the cytoplasm is inactivate. Phosphorylation on Thr-198 is required for interaction with 14-3-3 proteins. Phosphorylation on Thr-187, by CDK1 and CDK2 leads to protein ubiquitination and proteasomal degradation. Tyrosine phosphorylation promotes this process. Phosphorylation by PKB/AKT1 can be suppressed by LY294002, an inhibitor of the catalytic subunit of PI3K. Phosphorylation on Tyr-88 and Tyr-89 has no effect on binding CDK2, but is required for binding CDK4. Dephosphorylated on tyrosine residues by G-CSF. Dephosphorylated on Thr-187 by PPM1H, leading to CDKN1B stability. Ubiquitinated; in the cytoplasm by the KPC complex (composed of RNF123/KPC1 and UBAC1/KPC2) and, in the nucleus, by SCF(SKP2). The latter requires prior phosphorylation on Thr-187. Ubiquitinated; by a TRIM21-containing SCF(SKP2)-like complex; leads to its degradation. Post-translationally, subject to degradation in the lysosome. Interaction with SNX6 promotes lysosomal degradation.

The protein resides in the nucleus. It localises to the cytoplasm. The protein localises to the endosome. Functionally, important regulator of cell cycle progression. Inhibits the kinase activity of CDK2 bound to cyclin A, but has little inhibitory activity on CDK2 bound to SPDYA. Involved in G1 arrest. Potent inhibitor of cyclin E- and cyclin A-CDK2 complexes. Forms a complex with cyclin type D-CDK4 complexes and is involved in the assembly, stability, and modulation of CCND1-CDK4 complex activation. Acts either as an inhibitor or an activator of cyclin type D-CDK4 complexes depending on its phosphorylation state and/or stoichometry. The chain is Cyclin-dependent kinase inhibitor 1B (CDKN1B) from Felis catus (Cat).